Here is a 65-residue protein sequence, read N- to C-terminus: MRNELFQQAKSFVQQAVMVTNGFEEGDQEQAILRAKNAVSSAYANSTDAERQQLHQFQNQLDKLQ.

This is an uncharacterized protein from Bacillus subtilis (strain 168).